The primary structure comprises 219 residues: Guanylate kinase (219 aa).

Residues 15-194 (GLMFVLSSPS…AFAEVQSILK (180 aa)) form the Guanylate kinase-like domain. 22–29 (SPSGAGKT) serves as a coordination point for ATP.

This sequence belongs to the guanylate kinase family.

Its subcellular location is the cytoplasm. The enzyme catalyses GMP + ATP = GDP + ADP. In terms of biological role, essential for recycling GMP and indirectly, cGMP. The sequence is that of Guanylate kinase from Bradyrhizobium diazoefficiens (strain JCM 10833 / BCRC 13528 / IAM 13628 / NBRC 14792 / USDA 110).